The sequence spans 501 residues: L-aspartate decarboxylase dtxS4 (501 aa).

106–108 (KLT) serves as a coordination point for substrate. Lysine 320 is modified (N6-(pyridoxal phosphate)lysine). A substrate-binding site is contributed by arginine 474.

This sequence belongs to the group II decarboxylase family. The cofactor is pyridoxal 5'-phosphate.

The catalysed reaction is L-aspartate + H(+) = beta-alanine + CO2. The protein operates within secondary metabolite biosynthesis. Its function is as follows. L-aspartate decarboxylase; part of the gene cluster that mediates the biosynthesis of destruxins, insecticidal cyclic hexadepsipeptides which induce flaccid paralysis and visceral muscle contraction in insects through targeting the calcium channels and vacuolar-type ATPases. The aldo-keto reductase dtxS3 converts alpha-ketoisocaproic acid from deaminated leucine into alpha-hydroxyisocaproic acid (HIC), which is the first substrate for destruxin assembly by dtxS1. L-aspartate decarboxylase dtxS4 converts aspartic acid into beta-alanine, the last substrate for the destruxin assembly line performed by dtxS1. The nonribosomal peptide synthetase dtxS1 synthesizes destruxins B and B2, whereas the cytochrome P450 monooxygenase dtxS2 is required to convert destruxin B into other destruxin derivatives, including destructins C, D, A and E. Destruxin E-diol (ED) is further produced in a non-enzymatic manner from destruxin E. Destruxins play an important role in virulence and escape from insect host immune defenses. The sequence is that of L-aspartate decarboxylase dtxS4 from Metarhizium robertsii (strain ARSEF 23 / ATCC MYA-3075) (Metarhizium anisopliae (strain ARSEF 23)).